A 122-amino-acid chain; its full sequence is Small ribosomal subunit protein uS13 (122 aa).

Positions 98–122 (VRGQRTHTNARTRKGPAKAIAGKKK) are disordered.

Belongs to the universal ribosomal protein uS13 family. As to quaternary structure, part of the 30S ribosomal subunit. Forms a loose heterodimer with protein S19. Forms two bridges to the 50S subunit in the 70S ribosome.

Functionally, located at the top of the head of the 30S subunit, it contacts several helices of the 16S rRNA. In the 70S ribosome it contacts the 23S rRNA (bridge B1a) and protein L5 of the 50S subunit (bridge B1b), connecting the 2 subunits; these bridges are implicated in subunit movement. Contacts the tRNAs in the A and P-sites. This chain is Small ribosomal subunit protein uS13, found in Ruegeria pomeroyi (strain ATCC 700808 / DSM 15171 / DSS-3) (Silicibacter pomeroyi).